Here is a 604-residue protein sequence, read N- to C-terminus: Elongation factor 4 1 (604 aa).

The region spanning 10–191 (EHIRNFCIIA…AIVDSVPAPT (182 aa)) is the tr-type G domain. Residues 22 to 27 (DHGKST) and 138 to 141 (NKID) contribute to the GTP site.

Belongs to the TRAFAC class translation factor GTPase superfamily. Classic translation factor GTPase family. LepA subfamily.

The protein resides in the cell inner membrane. It catalyses the reaction GTP + H2O = GDP + phosphate + H(+). Required for accurate and efficient protein synthesis under certain stress conditions. May act as a fidelity factor of the translation reaction, by catalyzing a one-codon backward translocation of tRNAs on improperly translocated ribosomes. Back-translocation proceeds from a post-translocation (POST) complex to a pre-translocation (PRE) complex, thus giving elongation factor G a second chance to translocate the tRNAs correctly. Binds to ribosomes in a GTP-dependent manner. This chain is Elongation factor 4 1, found in Rhodopirellula baltica (strain DSM 10527 / NCIMB 13988 / SH1).